Here is a 374-residue protein sequence, read N- to C-terminus: Cell division protein C (374 aa).

In terms of domain architecture, MIT spans 11–73 (ARKYAINAVK…YKRRIEVLKE (63 aa)). 144–151 (GPPGCGKT) contacts ATP.

This sequence belongs to the AAA ATPase family. As to quaternary structure, interacts with CdvB.

It localises to the cytoplasm. Its subcellular location is the nucleoid. In terms of biological role, part of a cell division machinery. The CdvA, CdvB and CdvC proteins polymerize between segregating nucleoids and persist throughout cell division, forming a successively smaller structure during constriction. In Sulfolobus acidocaldarius (strain ATCC 33909 / DSM 639 / JCM 8929 / NBRC 15157 / NCIMB 11770), this protein is Cell division protein C.